Consider the following 573-residue polypeptide: MPQQWPATDIARLILDGFDDYREHFRRITDGARERFEQARWQDTQTASAARINLYEEKVGETVARLREYFEPDTLMDVTCWPLVKSAYISIIDLRFDDELSETWYNSIFCSLFSHDLISDGCMFIHTTRPSLRRARAAQTRTYKPQGQISGMLASIFADYRFSEAYADLPGDLLRLEAQLRENLPDWVCKDPELSVELFSSVLYRNKGAYLVGRIYTNDDQWPLVIPLLHREGRGIQIDALITDEAEVSIIFSFTRSYFMVDVPVPAEFIGFLKRILPGKHIAELYTSIGFYKHGKSEFYRALINHLANTDDQFIMAPGVRGMVMSVFTLPGFNTVFKIIKDRFSPSKNVDRATVIEKYRLVKSVDRVGRMADTQEFADFRFPLSKFEPACLAELLEVAPSTVSLEGETVLIRHCWTERRMTPLNLYLDNANEAQVREALEDYGLAIKQLAAANIFPGDMLLKNFGVTRHGRVVFYDYDEICFLTEANFRHIPAPRTPEDEMASEPWYSIGPLDVFPEEFPPFLFADAAQRKLFDQLHGELYNADYWKGLQEAIRAGKVIDVFPYRRKGLDNE.

ATP-binding positions include 317-323 (APGVRGM) and lysine 338. Residue aspartate 373 is part of the active site.

It belongs to the AceK family.

The protein resides in the cytoplasm. The catalysed reaction is L-seryl-[isocitrate dehydrogenase] + ATP = O-phospho-L-seryl-[isocitrate dehydrogenase] + ADP + H(+). In terms of biological role, bifunctional enzyme which can phosphorylate or dephosphorylate isocitrate dehydrogenase (IDH) on a specific serine residue. This is a regulatory mechanism which enables bacteria to bypass the Krebs cycle via the glyoxylate shunt in response to the source of carbon. When bacteria are grown on glucose, IDH is fully active and unphosphorylated, but when grown on acetate or ethanol, the activity of IDH declines drastically concomitant with its phosphorylation. This Pseudomonas fluorescens (strain Pf0-1) protein is Isocitrate dehydrogenase kinase/phosphatase.